We begin with the raw amino-acid sequence, 618 residues long: DNA mismatch repair protein MutL (618 aa).

The protein belongs to the DNA mismatch repair MutL/HexB family.

Functionally, this protein is involved in the repair of mismatches in DNA. It is required for dam-dependent methyl-directed DNA mismatch repair. May act as a 'molecular matchmaker', a protein that promotes the formation of a stable complex between two or more DNA-binding proteins in an ATP-dependent manner without itself being part of a final effector complex. This chain is DNA mismatch repair protein MutL, found in Porphyromonas gingivalis (strain ATCC 33277 / DSM 20709 / CIP 103683 / JCM 12257 / NCTC 11834 / 2561).